Reading from the N-terminus, the 259-residue chain is UPF0246 protein SG0407 (259 aa).

Belongs to the UPF0246 family.

This chain is UPF0246 protein SG0407, found in Sodalis glossinidius (strain morsitans).